The following is a 267-amino-acid chain: 3-methyl-2-oxobutanoate hydroxymethyltransferase (267 aa).

Mg(2+) is bound by residues Asp-45 and Asp-84. 3-methyl-2-oxobutanoate is bound by residues 45–46 (DS), Asp-84, and Lys-113. Glu-115 serves as a coordination point for Mg(2+). The Proton acceptor role is filled by Glu-182.

It belongs to the PanB family. In terms of assembly, homodecamer; pentamer of dimers. It depends on Mg(2+) as a cofactor.

It is found in the cytoplasm. It catalyses the reaction 3-methyl-2-oxobutanoate + (6R)-5,10-methylene-5,6,7,8-tetrahydrofolate + H2O = 2-dehydropantoate + (6S)-5,6,7,8-tetrahydrofolate. Its pathway is cofactor biosynthesis; coenzyme A biosynthesis. Functionally, catalyzes the reversible reaction in which hydroxymethyl group from 5,10-methylenetetrahydrofolate is transferred onto alpha-ketoisovalerate to form ketopantoate. The polypeptide is 3-methyl-2-oxobutanoate hydroxymethyltransferase (Saccharolobus islandicus (strain Y.N.15.51 / Yellowstone #2) (Sulfolobus islandicus)).